Reading from the N-terminus, the 977-residue chain is Alanine--tRNA ligase (977 aa).

The segment at 512 to 535 (SQVDSKLQSSTPAGTGSYDSKQVS) is disordered. Positions 618, 622, 720, and 724 each coordinate Zn(2+).

The protein belongs to the class-II aminoacyl-tRNA synthetase family. Zn(2+) is required as a cofactor.

The protein localises to the cytoplasm. It carries out the reaction tRNA(Ala) + L-alanine + ATP = L-alanyl-tRNA(Ala) + AMP + diphosphate. In terms of biological role, catalyzes the attachment of alanine to tRNA(Ala) in a two-step reaction: alanine is first activated by ATP to form Ala-AMP and then transferred to the acceptor end of tRNA(Ala). Also edits incorrectly charged Ser-tRNA(Ala) and Gly-tRNA(Ala) via its editing domain. This is Alanine--tRNA ligase from Leptospira interrogans serogroup Icterohaemorrhagiae serovar copenhageni (strain Fiocruz L1-130).